The primary structure comprises 125 residues: Fluoride-specific ion channel FluC (125 aa).

Helical transmembrane passes span 4–24 (LWVALGGALGALARYTVGVWI) and 34–54 (YGTFAINVTGCFLIGLALTVL). Positions 74 and 77 each coordinate Na(+). Residues 99–119 (VLYFGSSLALGILAVWLGMVV) traverse the membrane as a helical segment.

The protein belongs to the fluoride channel Fluc/FEX (TC 1.A.43) family.

It localises to the cell inner membrane. It catalyses the reaction fluoride(in) = fluoride(out). With respect to regulation, na(+) is not transported, but it plays an essential structural role and its presence is essential for fluoride channel function. In terms of biological role, fluoride-specific ion channel. Important for reducing fluoride concentration in the cell, thus reducing its toxicity. The polypeptide is Fluoride-specific ion channel FluC (Acidobacterium capsulatum (strain ATCC 51196 / DSM 11244 / BCRC 80197 / JCM 7670 / NBRC 15755 / NCIMB 13165 / 161)).